We begin with the raw amino-acid sequence, 519 residues long: Protein twist (519 aa).

4 disordered regions span residues 53–77 (MQQQ…QQQY), 131–156 (NFEQ…VATA), 301–321 (YEAY…SDRD), and 368–389 (FRKP…DEFS). Composition is skewed to low complexity over residues 54–76 (QQQQ…QQQQ) and 134–146 (QQQQ…QQQQ). Polar residues predominate over residues 308–317 (NSLNGSTYSS). The span at 368 to 379 (FRKPRRRLKRKP) shows a compositional bias: basic residues. One can recognise a bHLH domain in the interval 390 to 441 (NQRVMANVRERQRTQSLNDAFKALQQIIPTLPSDKLSKIQTLKLATRYIDFL).

In terms of assembly, efficient DNA binding requires dimerization with another bHLH protein. Homodimer.

It localises to the nucleus. Its function is as follows. Involved in the establishment and dorsoventral patterning of germ layers in the embryo. This Drosophila virilis (Fruit fly) protein is Protein twist.